The chain runs to 63 residues: Large ribosomal subunit protein uL29 (63 aa).

Belongs to the universal ribosomal protein uL29 family.

In Vibrio parahaemolyticus serotype O3:K6 (strain RIMD 2210633), this protein is Large ribosomal subunit protein uL29.